The following is a 658-amino-acid chain: Glycogen debranching enzyme (658 aa).

Asp336 functions as the Nucleophile in the catalytic mechanism. The Proton donor role is filled by Glu371. The tract at residues 459 to 483 (EANGEENRDGTNSNYSDNHGKEGLG) is disordered.

It belongs to the glycosyl hydrolase 13 family.

The enzyme catalyses Hydrolysis of (1-&gt;6)-alpha-D-glucosidic linkages to branches with degrees of polymerization of three or four glucose residues in limit dextrin.. Its pathway is glycan degradation; glycogen degradation. Removes maltotriose and maltotetraose chains that are attached by 1,6-alpha-linkage to the limit dextrin main chain, generating a debranched limit dextrin. The polypeptide is Glycogen debranching enzyme (Salmonella agona (strain SL483)).